Reading from the N-terminus, the 912-residue chain is MEDFARGAASPGPSRPGLVPVSIIGAEDEDFENELETNSEEQNSQFQSLEQVKRRPAHLMALLQHVALQFEPGPLLCCLHADMLGSLGPKEAKKAFLDFYHSFLEKTAVLRVPVPPNVAFELDRTRADLISEDVQRRFVQEVVQSQQVAVGRQLEDFRSKRLMGMTPWEQELAQLEAWVGRDRASYEARERHVAERLLMHLEEMQHTISTDEEKSAAVVNAIGLYMRHLGVRTKSGDKKSGRNFFRKKVMGNRRSDEPAKTKKGLSSILDAARWNRGEPQVPDFRHLKAEVDAEKPGATDRKGGVGMPSRDRNIGAPGQDTPGVSLHPLSLDSPDREPGADAPLELGDSSPQGPMSLESLAPPESTDEGAETESPEPGDEGEPGRSGLELEPEEPPGWRELVPPDTLHSLPKSQVKRQEVISELLVTEAAHVRMLRVLHDLFFQPMAECLFFPLEELQNIFPSLDELIEVHSLFLDRLMKRRQESGYLIEEIGDVLLARFDGAEGSWFQKISSRFCSRQSFALEQLKAKQRKDPRFCAFVQEAESRPRCRRLQLKDMIPTEMQRLTKYPLLLQSIGQNTEEPTEREKVELAAECCREILHHVNQAVRDMEDLLRLKDYQRRLDLSHLRQSSDPMLSEFKNLDITKKKLVHEGPLTWRVTKDKAVEVHVLLLDDLLLLLQRQDERLLLKSHSRTLTPTPDGKTMLRPVLRLTSAMTREVATDHKAFYVLFTWDQEAQIYELVAQTVSERKNWCALITETAGSLKVPAPASRPKPRPSPSSTREPLLSSSENGNGGRETSPADARTERILSDLLPFCRPGPEGQLAATALRKVLSLKQLLFPAEEDNGAGPPRDGDGVPGGGPLSPARTQEIQENLLSLEETMKQLEELEEEFCRLRPLLSQLGGNSVPQPGCT.

The 192-residue stretch at Glu-41–Arg-232 folds into the RGSL domain. Residues Lys-248 to Ser-413 are disordered. The segment covering Asp-283–Asn-313 has biased composition (basic and acidic residues). Acidic residues predominate over residues Ser-365–Gly-381. Ser-374 and Ser-409 each carry phosphoserine. The DH domain occupies Lys-416–Ala-605. The region spanning Lys-647–Gly-760 is the PH domain. Thr-695 bears the Phosphothreonine mark. Tyr-738 is subject to Phosphotyrosine; by JAK2. 2 disordered regions span residues Lys-763–Ala-802 and Ala-841–Ala-865. Residues Pro-777 to Glu-789 show a composition bias toward low complexity. Residue Ser-863 is modified to Phosphoserine. A coiled-coil region spans residues Ala-865–Pro-896.

Interacts with RHOA, GNA12 and GNA13. Homooligomerizes through the coiled coil region. May interact with CCPG1. Interacts with CTNNAL1. Post-translationally, phosphorylated by PKCA. Angiotensin-2 induced Tyr-738 phosphorylation is mediated by JAK2. Ubiquitously expressed.

The protein localises to the cytoplasm. Its subcellular location is the membrane. Functionally, seems to play a role in the regulation of RhoA GTPase by guanine nucleotide-binding alpha-12 (GNA12) and alpha-13 (GNA13) subunits. Acts as a GTPase-activating protein (GAP) for GNA12 and GNA13, and as guanine nucleotide exchange factor (GEF) for RhoA GTPase. Activated G alpha 13/GNA13 stimulates the RhoGEF activity through interaction with the RGS-like domain. This GEF activity is inhibited by binding to activated GNA12. Mediates angiotensin-2-induced RhoA activation. In lymphoid follicles, may trigger activation of GNA13 as part of S1PR2-dependent signaling pathway that leads to inhibition of germinal center (GC) B cell growth and migration outside the GC niche. The chain is Rho guanine nucleotide exchange factor 1 (ARHGEF1) from Homo sapiens (Human).